Reading from the N-terminus, the 736-residue chain is Subtilisin-like protease SBT4.6 (736 aa).

The first 24 residues, 1-24, serve as a signal peptide directing secretion; the sequence is MATAVSYCLLSCIFALLVVSFASA. The propeptide at 25–111 is activation peptide; that stretch reads GKDDQDKQVY…VFPSKNLNLQ (87 aa). One can recognise an Inhibitor I9 domain in the interval 33–110; it reads VYIVYMGALP…SVFPSKNLNL (78 aa). Residues 115 to 589 form the Peptidase S8 domain; it reads SWNFMGLKEG…AGHVDPIAAI (475 aa). Asp-143 acts as the Charge relay system in catalysis. Asn-174 is a glycosylation site (N-linked (GlcNAc...) asparagine). His-204 functions as the Charge relay system in the catalytic mechanism. Asn-227 is a glycosylation site (N-linked (GlcNAc...) asparagine). The PA domain maps to 362-442; the sequence is KYPLVYGKSA…PVSVLSEDDY (81 aa). An N-linked (GlcNAc...) asparagine glycan is attached at Asn-450. The active-site Charge relay system is the Ser-527. N-linked (GlcNAc...) asparagine glycosylation is found at Asn-564, Asn-598, Asn-610, and Asn-668.

This sequence belongs to the peptidase S8 family. In terms of processing, the C-terminal propeptide is autocleaved.

It localises to the secreted. This is Subtilisin-like protease SBT4.6 from Arabidopsis thaliana (Mouse-ear cress).